The chain runs to 109 residues: UPF0060 membrane protein PCC8801_1733 (109 aa).

4 consecutive transmembrane segments (helical) span residues 7-27 (LLYF…VWLW), 36-56 (YALL…LQTA), 58-78 (FGRV…LWGW), and 87-107 (SYDW…MYAP).

The protein belongs to the UPF0060 family.

It is found in the cell inner membrane. This chain is UPF0060 membrane protein PCC8801_1733, found in Rippkaea orientalis (strain PCC 8801 / RF-1) (Cyanothece sp. (strain PCC 8801)).